The primary structure comprises 192 residues: Ion-translocating oxidoreductase complex subunit A (192 aa).

Helical transmembrane passes span 5–25, 39–59, 67–87, 102–122, 134–154, and 171–191; these read ILLL…FLGL, IGMG…AYLV, LGIE…VVQF, LLGI…VALL, IIYG…FASM, and SIAM…TGLV.

The protein belongs to the NqrDE/RnfAE family. The complex is composed of six subunits: RnfA, RnfB, RnfC, RnfD, RnfE and RnfG.

The protein resides in the cell inner membrane. Functionally, part of a membrane-bound complex that couples electron transfer with translocation of ions across the membrane. The protein is Ion-translocating oxidoreductase complex subunit A of Vibrio campbellii (strain ATCC BAA-1116).